We begin with the raw amino-acid sequence, 427 residues long: Protein adenylyltransferase Fic (427 aa).

Residues 17 to 37 form a helical membrane-spanning segment; the sequence is LLLASLAGLSIAIIVTHAPVF. TPR repeat units lie at residues 77–110 and 111–143; these read ALAA…APHH and PEIL…NPLD. The short motif at 200-205 is the Inhibitory (S/T)XXXE(G/N) motif element; it reads SNAIEG. Residues Glu204 and 286 to 289 contribute to the ATP site; that span reads VSDH. The Fido domain occupies 255 to 390; the sequence is ITIDDIIEIH…IRPFIRFVAR (136 aa). His333 is an active-site residue. Residues 337 to 344, 369 to 370, and Asn377 contribute to the ATP site; these read DGNGRTAR and YY.

This sequence belongs to the fic family. Homodimer.

It is found in the membrane. It carries out the reaction L-tyrosyl-[protein] + ATP = O-(5'-adenylyl)-L-tyrosyl-[protein] + diphosphate. The catalysed reaction is L-threonyl-[protein] + ATP = 3-O-(5'-adenylyl)-L-threonyl-[protein] + diphosphate. It catalyses the reaction 3-O-(5'-adenylyl)-L-threonyl-[protein] + H2O = L-threonyl-[protein] + AMP + H(+). Its activity is regulated as follows. The side chain of Glu-204 determines which of the two opposing activities (AMPylase or de-AMPylase) will take place. In response to endoplasmic reticulum stress, mediates de-AMPylase activity. Adenylyltransferase activity is inhibited by the inhibitory helix present at the N-terminus: Glu-204 binds ATP and competes with ATP-binding at Arg-344, thereby preventing adenylyltransferase activity. In unstressed cells, disengagement of Glu-204 promotes adenylyltransferase activity. Activation dissociates ATP-binding from Glu-204, allowing ordered binding of the entire ATP moiety with the alpha-phosphate in an orientation that is productive for accepting an incoming target hydroxyl side chain. Protein that can both mediate the addition of adenosine 5'-monophosphate (AMP) to specific residues of target proteins (AMPylation), and the removal of the same modification from target proteins (de-AMPylation), depending on the context. The side chain of Glu-204 determines which of the two opposing activities (AMPylase or de-AMPylase) will take place. Acts as a key regulator of the unfolded protein response (UPR) by mediating AMPylation or de-AMPylation of Hsc70-3/BiP. In unstressed cells, acts as an adenylyltransferase by mediating AMPylation of Hsc70-3/BiP, thereby inactivating it. In response to endoplasmic reticulum stress, acts as a phosphodiesterase by mediating removal of ATP (de-AMPylation) from Hsc70-3/BiP, leading to restore HSPA5/BiP activity. The protein is Protein adenylyltransferase Fic of Nematostella vectensis (Starlet sea anemone).